The following is a 159-amino-acid chain: Ribosomal RNA large subunit methyltransferase H (159 aa).

Residues Leu-76 and Gly-108 each contribute to the S-adenosyl-L-methionine site.

Belongs to the RNA methyltransferase RlmH family. As to quaternary structure, homodimer.

The protein resides in the cytoplasm. The catalysed reaction is pseudouridine(1915) in 23S rRNA + S-adenosyl-L-methionine = N(3)-methylpseudouridine(1915) in 23S rRNA + S-adenosyl-L-homocysteine + H(+). Its function is as follows. Specifically methylates the pseudouridine at position 1915 (m3Psi1915) in 23S rRNA. The polypeptide is Ribosomal RNA large subunit methyltransferase H (Lactiplantibacillus plantarum (strain ATCC BAA-793 / NCIMB 8826 / WCFS1) (Lactobacillus plantarum)).